Here is a 685-residue protein sequence, read N- to C-terminus: Threonine--tRNA ligase (685 aa).

Residues 1–65 enclose the TGS domain; the sequence is MSTPASAAPA…DTDVEVEPVA (65 aa). A catalytic region spans residues 262-568; sequence DHRKLGSELD…LTEHYAGAFP (307 aa). 3 residues coordinate Zn(2+): Cys-367, His-418, and His-545.

It belongs to the class-II aminoacyl-tRNA synthetase family. As to quaternary structure, homodimer. Requires Zn(2+) as cofactor.

The protein localises to the cytoplasm. It catalyses the reaction tRNA(Thr) + L-threonine + ATP = L-threonyl-tRNA(Thr) + AMP + diphosphate + H(+). Its function is as follows. Catalyzes the attachment of threonine to tRNA(Thr) in a two-step reaction: L-threonine is first activated by ATP to form Thr-AMP and then transferred to the acceptor end of tRNA(Thr). Also edits incorrectly charged L-seryl-tRNA(Thr). This is Threonine--tRNA ligase from Rhodococcus jostii (strain RHA1).